A 310-amino-acid polypeptide reads, in one-letter code: Lipoyl synthase (310 aa).

[4Fe-4S] cluster-binding residues include Cys51, Cys56, Cys62, Cys77, Cys81, Cys84, and Ser290. Positions 63–280 constitute a Radical SAM core domain; it reads WSRKTATYLA…RRVGESLGLF (218 aa).

Belongs to the radical SAM superfamily. Lipoyl synthase family. [4Fe-4S] cluster is required as a cofactor.

Its subcellular location is the cytoplasm. It carries out the reaction [[Fe-S] cluster scaffold protein carrying a second [4Fe-4S](2+) cluster] + N(6)-octanoyl-L-lysyl-[protein] + 2 oxidized [2Fe-2S]-[ferredoxin] + 2 S-adenosyl-L-methionine + 4 H(+) = [[Fe-S] cluster scaffold protein] + N(6)-[(R)-dihydrolipoyl]-L-lysyl-[protein] + 4 Fe(3+) + 2 hydrogen sulfide + 2 5'-deoxyadenosine + 2 L-methionine + 2 reduced [2Fe-2S]-[ferredoxin]. Its pathway is protein modification; protein lipoylation via endogenous pathway; protein N(6)-(lipoyl)lysine from octanoyl-[acyl-carrier-protein]: step 2/2. In terms of biological role, catalyzes the radical-mediated insertion of two sulfur atoms into the C-6 and C-8 positions of the octanoyl moiety bound to the lipoyl domains of lipoate-dependent enzymes, thereby converting the octanoylated domains into lipoylated derivatives. This Chlamydia abortus (strain DSM 27085 / S26/3) (Chlamydophila abortus) protein is Lipoyl synthase.